Reading from the N-terminus, the 326-residue chain is Holliday junction branch migration complex subunit RuvB (326 aa).

Residues 1–180 are large ATPase domain (RuvB-L); the sequence is MKSISCGKEY…FGIPLHLEFY (180 aa). ATP is bound by residues Ile19, Arg20, Gly61, Lys64, Thr65, Thr66, 127–129, Arg170, Tyr180, and Arg217; that span reads EDF. Thr65 serves as a coordination point for Mg(2+). The small ATPAse domain (RuvB-S) stretch occupies residues 181 to 251; sequence SFEELVNIIK…VADSVLLKLG (71 aa). The segment at 254–326 is head domain (RuvB-H); the sequence is KMGLNKLDMN…QAKEYLSFQH (73 aa). 2 residues coordinate DNA: Arg307 and Arg312.

This sequence belongs to the RuvB family. As to quaternary structure, homohexamer. Forms an RuvA(8)-RuvB(12)-Holliday junction (HJ) complex. HJ DNA is sandwiched between 2 RuvA tetramers; dsDNA enters through RuvA and exits via RuvB. An RuvB hexamer assembles on each DNA strand where it exits the tetramer. Each RuvB hexamer is contacted by two RuvA subunits (via domain III) on 2 adjacent RuvB subunits; this complex drives branch migration. In the full resolvosome a probable DNA-RuvA(4)-RuvB(12)-RuvC(2) complex forms which resolves the HJ.

It is found in the cytoplasm. It carries out the reaction ATP + H2O = ADP + phosphate + H(+). In terms of biological role, the RuvA-RuvB-RuvC complex processes Holliday junction (HJ) DNA during genetic recombination and DNA repair, while the RuvA-RuvB complex plays an important role in the rescue of blocked DNA replication forks via replication fork reversal (RFR). RuvA specifically binds to HJ cruciform DNA, conferring on it an open structure. The RuvB hexamer acts as an ATP-dependent pump, pulling dsDNA into and through the RuvAB complex. RuvB forms 2 homohexamers on either side of HJ DNA bound by 1 or 2 RuvA tetramers; 4 subunits per hexamer contact DNA at a time. Coordinated motions by a converter formed by DNA-disengaged RuvB subunits stimulates ATP hydrolysis and nucleotide exchange. Immobilization of the converter enables RuvB to convert the ATP-contained energy into a lever motion, pulling 2 nucleotides of DNA out of the RuvA tetramer per ATP hydrolyzed, thus driving DNA branch migration. The RuvB motors rotate together with the DNA substrate, which together with the progressing nucleotide cycle form the mechanistic basis for DNA recombination by continuous HJ branch migration. Branch migration allows RuvC to scan DNA until it finds its consensus sequence, where it cleaves and resolves cruciform DNA. This Wolbachia pipientis wMel protein is Holliday junction branch migration complex subunit RuvB.